Here is a 186-residue protein sequence, read N- to C-terminus: MGVFHIVVGLGNPGQEYEKTRHNIGWRVVEELVKRQNLSFKIDKKAKSKVAFKEKLVFVLPLTYMNLSGQALSYLLQKEKCSSKDILVILDDISLPLGKLRFRPKGSSGGHKGLESIIEELHTEDIPRLRLGIGPLPEGEQLADYVLKPFLEEEKDKVEEMILKAIQFFECLQKEGIEIALNKLSA.

Y17 contributes to the tRNA binding site. H22 acts as the Proton acceptor in catalysis. TRNA-binding residues include Y64 and N66.

This sequence belongs to the PTH family. In terms of assembly, monomer.

The protein localises to the cytoplasm. It catalyses the reaction an N-acyl-L-alpha-aminoacyl-tRNA + H2O = an N-acyl-L-amino acid + a tRNA + H(+). Functionally, hydrolyzes ribosome-free peptidyl-tRNAs (with 1 or more amino acids incorporated), which drop off the ribosome during protein synthesis, or as a result of ribosome stalling. Catalyzes the release of premature peptidyl moieties from peptidyl-tRNA molecules trapped in stalled 50S ribosomal subunits, and thus maintains levels of free tRNAs and 50S ribosomes. The protein is Peptidyl-tRNA hydrolase of Methylacidiphilum infernorum (isolate V4) (Methylokorus infernorum (strain V4)).